Here is a 180-residue protein sequence, read N- to C-terminus: Ribosome rescue factor SmrB (180 aa).

The region spanning 98–173 (LDLHGLTQLQ…GNAALLVLVA (76 aa)) is the Smr domain.

It belongs to the SmrB family. As to quaternary structure, associates with collided ribosomes, but not with correctly translating polysomes.

Acts as a ribosome collision sensor. Detects stalled/collided disomes (pairs of ribosomes where the leading ribosome is stalled and a second ribosome has collided with it) and endonucleolytically cleaves mRNA at the 5' boundary of the stalled ribosome. Stalled/collided disomes form a new interface (primarily via the 30S subunits) that binds SmrB. Cleaved mRNA becomes available for tmRNA ligation, leading to ribosomal subunit dissociation and rescue of stalled ribosomes. The chain is Ribosome rescue factor SmrB from Pectobacterium atrosepticum (strain SCRI 1043 / ATCC BAA-672) (Erwinia carotovora subsp. atroseptica).